The following is a 96-amino-acid chain: MPTTLIFTSFFLALLGLSLQRKHLLSLLLTLESMALALYVSTALWALNNTSLPIMAAPLIILTFSACEAGMGLSLMIATARTHNTDQLKALNLLKC.

The next 3 helical transmembrane spans lie at 1–21, 27–47, and 57–77; these read MPTT…SLQR, LLLT…LWAL, and APLI…SLMI.

Belongs to the complex I subunit 4L family.

The protein resides in the mitochondrion membrane. The enzyme catalyses a ubiquinone + NADH + 5 H(+)(in) = a ubiquinol + NAD(+) + 4 H(+)(out). Its function is as follows. Core subunit of the mitochondrial membrane respiratory chain NADH dehydrogenase (Complex I) which catalyzes electron transfer from NADH through the respiratory chain, using ubiquinone as an electron acceptor. Part of the enzyme membrane arm which is embedded in the lipid bilayer and involved in proton translocation. This is NADH-ubiquinone oxidoreductase chain 4L (MT-ND4L) from Petromyzon marinus (Sea lamprey).